Reading from the N-terminus, the 270-residue chain is MLLGSVPQLDRVAVQLGPFPVYWYGIIIGTGVLLGLWLATREGERLGIPKDTFVDLVLIAVPIAILFARMYYVIFEWEYYAQNPSQIINIRQGGLAIHGGLIGAVITGILFAKRRGVSFWKLADIAAPSILLGQAIGRWGNFMNQEAHGDEVTRQFLEGLHLPDFIINQMYIDGVYYHPTFLYESLWNFAGVILLLALRKVNLRRGELFFTYLIWYSIGRFFVEGLRTDSLMLGPLRIAQVMSIGLVVISIIFIIVRRKMGQADKRYSEN.

The next 4 helical transmembrane spans lie at 19-39, 56-76, 92-112, and 116-136; these read FPVYWYGIIIGTGVLLGLWLA, LVLIAVPIAILFARMYYVIFE, QGGLAIHGGLIGAVITGILFA, and GVSFWKLADIAAPSILLGQAI. Residue Arg-138 coordinates a 1,2-diacyl-sn-glycero-3-phospho-(1'-sn-glycerol). The next 3 helical transmembrane spans lie at 178–198, 206–226, and 236–256; these read HPTFLYESLWNFAGVILLLAL, GELFFTYLIWYSIGRFFVEGL, and LRIAQVMSIGLVVISIIFIIV.

The protein belongs to the Lgt family.

The protein localises to the cell membrane. The catalysed reaction is L-cysteinyl-[prolipoprotein] + a 1,2-diacyl-sn-glycero-3-phospho-(1'-sn-glycerol) = an S-1,2-diacyl-sn-glyceryl-L-cysteinyl-[prolipoprotein] + sn-glycerol 1-phosphate + H(+). It participates in protein modification; lipoprotein biosynthesis (diacylglyceryl transfer). Its function is as follows. Catalyzes the transfer of the diacylglyceryl group from phosphatidylglycerol to the sulfhydryl group of the N-terminal cysteine of a prolipoprotein, the first step in the formation of mature lipoproteins. The sequence is that of Phosphatidylglycerol--prolipoprotein diacylglyceryl transferase from Bacillus cereus (strain ZK / E33L).